A 31-amino-acid polypeptide reads, in one-letter code: Sarcolipin (31 aa).

Residues 1 to 7 (MGINTRE) lie on the Cytoplasmic side of the membrane. Residues 8 to 26 (LFLNFTIVLITVILMWLLV) form a helical membrane-spanning segment. The Lumenal segment spans residues 27–31 (RSYQY).

Belongs to the sarcolipin family. Homooligomer. Can also form heterooligomers with other sarcoplasmic/endoplasmic reticulum calcium ATPase (SERCA) regulators ARLN, ERLN, PLN and STRIT1/DWORF. Monomer. Interacts with calcium ATPase ATP2A1/SERCA1. Interacts as a monomer with ATP2A2/SERCA2; the interaction decreases ATP2A2 Ca(2+) affinity. Interacts with VMP1; VMP1 competes with PLN and SLN to prevent them from forming an inhibitory complex with ATP2A2.

It is found in the sarcoplasmic reticulum membrane. Its subcellular location is the endoplasmic reticulum membrane. Reversibly inhibits the activity of ATP2A1/SERCA1 and ATP2A2/SERCA2 in sarcoplasmic reticulum by decreasing the apparent affinity of the ATPase for Ca(2+). Also inhibits the activity of ATP2A3/SERCA3. Modulates calcium re-uptake during muscle relaxation and plays an important role in calcium homeostasis in muscle. Required for muscle-based, non-shivering thermogenesis. In Homo sapiens (Human), this protein is Sarcolipin.